The primary structure comprises 116 residues: Large ribosomal subunit protein bL19 (116 aa).

Belongs to the bacterial ribosomal protein bL19 family.

This protein is located at the 30S-50S ribosomal subunit interface and may play a role in the structure and function of the aminoacyl-tRNA binding site. The sequence is that of Large ribosomal subunit protein bL19 from Staphylococcus haemolyticus (strain JCSC1435).